We begin with the raw amino-acid sequence, 298 residues long: NADH-cytochrome b5 reductase 2 (298 aa).

A helical membrane pass occupies residues 15-38 (FVLPVAAAAVGLASYSFTSSSFIA). In terms of domain architecture, FAD-binding FR-type spans 49–153 (DEWIDLKLIS…KGPFVKWKWE (105 aa)). 156–191 (QFKSIALIGGGTGITPLYQLIHEITKNPADKTQVSL) contacts FAD.

Belongs to the flavoprotein pyridine nucleotide cytochrome reductase family. FAD serves as cofactor.

The protein resides in the mitochondrion outer membrane. It carries out the reaction 2 Fe(III)-[cytochrome b5] + NADH = 2 Fe(II)-[cytochrome b5] + NAD(+) + H(+). May mediate the reduction of outer membrane cytochrome b5. The chain is NADH-cytochrome b5 reductase 2 (MCR1) from Scheffersomyces stipitis (strain ATCC 58785 / CBS 6054 / NBRC 10063 / NRRL Y-11545) (Yeast).